The chain runs to 439 residues: Ribosomal protein uS12 methylthiotransferase RimO (439 aa).

The MTTase N-terminal domain maps to 3–113; it reads HKVGFVSLGC…VVNAVHQHLP (111 aa). [4Fe-4S] cluster-binding residues include C12, C48, C77, C144, C148, and C151. A Radical SAM core domain is found at 130-367; sequence LTPRHYAYLK…MQVQAEISRN (238 aa). Residues 370-436 enclose the TRAM domain; sequence KNKIGSTQTV…DYDLYGDLEY (67 aa).

It belongs to the methylthiotransferase family. RimO subfamily. Requires [4Fe-4S] cluster as cofactor.

It is found in the cytoplasm. The catalysed reaction is L-aspartate(89)-[ribosomal protein uS12]-hydrogen + (sulfur carrier)-SH + AH2 + 2 S-adenosyl-L-methionine = 3-methylsulfanyl-L-aspartate(89)-[ribosomal protein uS12]-hydrogen + (sulfur carrier)-H + 5'-deoxyadenosine + L-methionine + A + S-adenosyl-L-homocysteine + 2 H(+). Its function is as follows. Catalyzes the methylthiolation of an aspartic acid residue of ribosomal protein uS12. This chain is Ribosomal protein uS12 methylthiotransferase RimO, found in Legionella pneumophila (strain Corby).